A 508-amino-acid polypeptide reads, in one-letter code: Photosystem II CP47 reaction center protein (508 aa).

The next 6 helical transmembrane spans lie at 21–36, 101–115, 140–156, 203–218, 237–252, and 457–472; these read SVHI…WAGS, IVFS…IWHW, GIHL…FGAF, IAAG…FHLS, VLSS…AFVV, and SFAL…HGAR.

Belongs to the PsbB/PsbC family. PsbB subfamily. In terms of assembly, PSII is composed of 1 copy each of membrane proteins PsbA, PsbB, PsbC, PsbD, PsbE, PsbF, PsbH, PsbI, PsbJ, PsbK, PsbL, PsbM, PsbT, PsbX, PsbY, PsbZ, Psb30/Ycf12, at least 3 peripheral proteins of the oxygen-evolving complex and a large number of cofactors. It forms dimeric complexes. Requires Binds multiple chlorophylls. PSII binds additional chlorophylls, carotenoids and specific lipids. as cofactor.

It localises to the plastid. The protein resides in the chloroplast thylakoid membrane. One of the components of the core complex of photosystem II (PSII). It binds chlorophyll and helps catalyze the primary light-induced photochemical processes of PSII. PSII is a light-driven water:plastoquinone oxidoreductase, using light energy to abstract electrons from H(2)O, generating O(2) and a proton gradient subsequently used for ATP formation. This chain is Photosystem II CP47 reaction center protein, found in Arabis hirsuta (Hairy rock-cress).